A 157-amino-acid chain; its full sequence is Thiosulfate sulfurtransferase/rhodanese-like domain-containing protein 3 (157 aa).

One can recognise a Rhodanese domain in the interval 52 to 154 (NSKDIMLIDV…WVTYEISEEK (103 aa)). Lys96 is modified (N6-succinyllysine). The active-site Cysteine persulfide intermediate is Cys114.

In Mus musculus (Mouse), this protein is Thiosulfate sulfurtransferase/rhodanese-like domain-containing protein 3 (Tstd3).